The sequence spans 1410 residues: Condensin-1 complex subunit CAP-D2 (1410 aa).

Basic and acidic residues predominate over residues 469–480; that stretch reads LEPTEHASKEST. Disordered regions lie at residues 469–492, 504–525, 860–879, and 1208–1410; these read LEPT…DGEI, HQDS…EKDV, KTKK…NLEA, and KEQE…GSRS. Polar residues predominate over residues 869–879; that stretch reads ESQNTEENLEA. The span at 1208–1226 shows a compositional bias: basic and acidic residues; that stretch reads KEQEETARNAEVHREKTKT. Acidic residues-rich tracts occupy residues 1240-1284 and 1306-1319; these read PVEE…EEPD and IETE…DSEP. The segment covering 1323–1339 has biased composition (polar residues); sequence QCGTTNPRSLNRKTSGD. Positions 1342 to 1365 are enriched in acidic residues; that stretch reads IETESEEEQSDSEEEPSDSEEEPD. Polar residues predominate over residues 1368-1379; it reads QCGTTNPRSLNQ.

Belongs to the CND1 (condensin subunit 1) family. Component of the condensin complex. As to expression, present in buds.

The protein localises to the chromosome. Its subcellular location is the nucleus. Its function is as follows. Essential protein. Regulatory subunit of the condensin complex, a complex required for conversion of interphase chromatin into mitotic-like condense chromosomes. The condensin complex probably introduces positive supercoils into relaxed DNA in the presence of type I topoisomerases and converts nicked DNA into positive knotted forms in the presence of type II topoisomerases. Required for fertility, growth and euchromatin organization, but not for sister chromatid cohesion. Necessary to maintain normal structural integrity of the meiotic chromosomes during the two nuclear divisions of gametogenesis, especially to maintain compaction of the centromeric repeats and 45S rDNA. Also seems to be involved in crossover formation during meiotic prophase I. Prevents centromeric and pericentromeric heterochromatin repeats association. Contributes to the induction of stress-responsive genes in response to stress treatment. This chain is Condensin-1 complex subunit CAP-D2, found in Arabidopsis thaliana (Mouse-ear cress).